A 380-amino-acid polypeptide reads, in one-letter code: MKDVLLIKYGELALKGENRSFFENTLVKNIKYALRDFDGVKVEKTHGRIYVECEKDVEEAIERLKKVFGIVGITRAKEADLDLEEIFKAAVDLMKSHQGKTFKVETKRPNKAFPYNSMEVSRRVGAAVLKNVKNMKVDVHNPDVLLNVEIREKAFLYAGVIEGAGGLPLGTNGKATVLLSGGIDSPVAAWMMMKRGVEVEAVYFHSPPYTSDRAKEKVVDLCKVLSQYGRGMRLHVVHFTDLQLEIYEKCPARLTTIIMRRMMMKIAEKIAQQNGSLALITGESLGQVASQTIESLYVTNSSVSLPVFRPLIGMDKREIIDIAQKIGTYEISIRPYEDCCTIFVPKHPATKPKLEKVLEAEEKMDYQKFIDNFEEEVIEI.

The 105-residue stretch at 58 to 162 (EEAIERLKKV…KAFLYAGVIE (105 aa)) folds into the THUMP domain. ATP is bound by residues 178–179 (LL), 203–204 (YF), arginine 260, glycine 282, and glutamine 291.

The protein belongs to the ThiI family.

It is found in the cytoplasm. The enzyme catalyses [ThiI sulfur-carrier protein]-S-sulfanyl-L-cysteine + a uridine in tRNA + 2 reduced [2Fe-2S]-[ferredoxin] + ATP + H(+) = [ThiI sulfur-carrier protein]-L-cysteine + a 4-thiouridine in tRNA + 2 oxidized [2Fe-2S]-[ferredoxin] + AMP + diphosphate. It carries out the reaction [ThiS sulfur-carrier protein]-C-terminal Gly-Gly-AMP + S-sulfanyl-L-cysteinyl-[cysteine desulfurase] + AH2 = [ThiS sulfur-carrier protein]-C-terminal-Gly-aminoethanethioate + L-cysteinyl-[cysteine desulfurase] + A + AMP + 2 H(+). Its pathway is cofactor biosynthesis; thiamine diphosphate biosynthesis. Catalyzes the ATP-dependent transfer of a sulfur to tRNA to produce 4-thiouridine in position 8 of tRNAs, which functions as a near-UV photosensor. Also catalyzes the transfer of sulfur to the sulfur carrier protein ThiS, forming ThiS-thiocarboxylate. This is a step in the synthesis of thiazole, in the thiamine biosynthesis pathway. The sulfur is donated as persulfide by IscS. This is Probable tRNA sulfurtransferase (thiI) from Caldanaerobacter subterraneus subsp. tengcongensis (strain DSM 15242 / JCM 11007 / NBRC 100824 / MB4) (Thermoanaerobacter tengcongensis).